The following is an 89-amino-acid chain: Putative defensin-like protein 230 (89 aa).

Positions 1–26 (MRSVIWFIVSYTLMLLVLRGGKEVEA) are cleaved as a signal peptide. 4 disulfides stabilise this stretch: cysteine 30–cysteine 84, cysteine 40–cysteine 65, cysteine 48–cysteine 78, and cysteine 63–cysteine 80.

The protein belongs to the DEFL family.

Its subcellular location is the secreted. The sequence is that of Putative defensin-like protein 230 (SCRL24) from Arabidopsis thaliana (Mouse-ear cress).